The primary structure comprises 308 residues: Aspartate carbamoyltransferase catalytic subunit (308 aa).

Carbamoyl phosphate-binding residues include R57 and T58. K86 serves as a coordination point for L-aspartate. Carbamoyl phosphate contacts are provided by R107, H135, and Q138. L-aspartate contacts are provided by R167 and R228. Carbamoyl phosphate-binding residues include L267 and P268.

This sequence belongs to the aspartate/ornithine carbamoyltransferase superfamily. ATCase family. Heterooligomer of catalytic and regulatory chains.

The enzyme catalyses carbamoyl phosphate + L-aspartate = N-carbamoyl-L-aspartate + phosphate + H(+). Its pathway is pyrimidine metabolism; UMP biosynthesis via de novo pathway; (S)-dihydroorotate from bicarbonate: step 2/3. Catalyzes the condensation of carbamoyl phosphate and aspartate to form carbamoyl aspartate and inorganic phosphate, the committed step in the de novo pyrimidine nucleotide biosynthesis pathway. This Methanococcoides burtonii (strain DSM 6242 / NBRC 107633 / OCM 468 / ACE-M) protein is Aspartate carbamoyltransferase catalytic subunit.